A 561-amino-acid polypeptide reads, in one-letter code: Malto-oligosyltrehalose trehalohydrolase (561 aa).

253–258 (RLDAVH) is a substrate binding site. Catalysis depends on Asp255, which acts as the Nucleophile. The active-site Proton donor is Glu286. Residues 311–315 (DDFHH) and 379–384 (HDQVGN) contribute to the substrate site.

The protein belongs to the glycosyl hydrolase 13 family. In terms of assembly, homodimer.

Its subcellular location is the cytoplasm. The enzyme catalyses hydrolysis of (1-&gt;4)-alpha-D-glucosidic linkage in 4-alpha-D-[(1-&gt;4)-alpha-D-glucanosyl]n trehalose to yield trehalose and (1-&gt;4)-alpha-D-glucan.. Its pathway is glycan biosynthesis; trehalose biosynthesis. In Saccharolobus solfataricus (strain ATCC 35092 / DSM 1617 / JCM 11322 / P2) (Sulfolobus solfataricus), this protein is Malto-oligosyltrehalose trehalohydrolase (treZ).